Here is a 205-residue protein sequence, read N- to C-terminus: Fibrillarin-like rRNA/tRNA 2'-O-methyltransferase (205 aa).

S-adenosyl-L-methionine-binding positions include 60–61, 76–77, 101–102, and 121–124; these read ST, EF, DA, and DIAQ.

Belongs to the methyltransferase superfamily. Fibrillarin family. Interacts with nop5. Component of box C/D small ribonucleoprotein (sRNP) particles that contain rpl7ae, FlpA and nop5, plus a guide RNA.

Involved in pre-rRNA and tRNA processing. Utilizes the methyl donor S-adenosyl-L-methionine to catalyze the site-specific 2'-hydroxyl methylation of ribose moieties in rRNA and tRNA. Site specificity is provided by a guide RNA that base pairs with the substrate. Methylation occurs at a characteristic distance from the sequence involved in base pairing with the guide RNA. This Methanospirillum hungatei JF-1 (strain ATCC 27890 / DSM 864 / NBRC 100397 / JF-1) protein is Fibrillarin-like rRNA/tRNA 2'-O-methyltransferase.